The primary structure comprises 159 residues: Ribonuclease H (159 aa).

The RNase H type-1 domain maps to 10–153; sequence TQTQVVIYTD…ADALANQGVE (144 aa). Residues Asp-19, Glu-57, Asp-79, and Asp-145 each contribute to the Mg(2+) site.

This sequence belongs to the RNase H family. As to quaternary structure, monomer. The cofactor is Mg(2+).

Its subcellular location is the cytoplasm. It carries out the reaction Endonucleolytic cleavage to 5'-phosphomonoester.. In terms of biological role, endonuclease that specifically degrades the RNA of RNA-DNA hybrids. The protein is Ribonuclease H of Polaromonas sp. (strain JS666 / ATCC BAA-500).